The sequence spans 61 residues: Small ribosomal subunit protein uS14 (61 aa).

Residues Cys24, Cys27, Cys40, and Cys43 each coordinate Zn(2+).

This sequence belongs to the universal ribosomal protein uS14 family. Zinc-binding uS14 subfamily. In terms of assembly, part of the 30S ribosomal subunit. Contacts proteins S3 and S10. It depends on Zn(2+) as a cofactor.

Binds 16S rRNA, required for the assembly of 30S particles and may also be responsible for determining the conformation of the 16S rRNA at the A site. This is Small ribosomal subunit protein uS14 from Coprothermobacter proteolyticus (strain ATCC 35245 / DSM 5265 / OCM 4 / BT).